The sequence spans 669 residues: DNA ligase (669 aa).

Residues 33–37 (DLTYD), 82–83 (SL), and Glu115 contribute to the NAD(+) site. The active-site N6-AMP-lysine intermediate is the Lys117. NAD(+)-binding residues include Arg138, Glu172, Lys286, and Lys310. Zn(2+) contacts are provided by Cys401, Cys404, Cys417, and Cys422.

It belongs to the NAD-dependent DNA ligase family. LigA subfamily. It depends on Mg(2+) as a cofactor. The cofactor is Mn(2+).

It catalyses the reaction NAD(+) + (deoxyribonucleotide)n-3'-hydroxyl + 5'-phospho-(deoxyribonucleotide)m = (deoxyribonucleotide)n+m + AMP + beta-nicotinamide D-nucleotide.. In terms of biological role, DNA ligase that catalyzes the formation of phosphodiester linkages between 5'-phosphoryl and 3'-hydroxyl groups in double-stranded DNA using NAD as a coenzyme and as the energy source for the reaction. It is essential for DNA replication and repair of damaged DNA. The chain is DNA ligase from Borrelia hermsii (strain HS1 / DAH).